The following is a 262-amino-acid chain: Flap endonuclease Xni (262 aa).

D105 contacts Mg(2+). One can recognise a 5'-3' exonuclease domain in the interval E162–L254. 5 residues coordinate K(+): L172, A173, P181, I183, and I186. Residues G185–S190 form an interaction with DNA region.

Belongs to the Xni family. The cofactor is Mg(2+). K(+) is required as a cofactor.

Functionally, has flap endonuclease activity. During DNA replication, flap endonucleases cleave the 5'-overhanging flap structure that is generated by displacement synthesis when DNA polymerase encounters the 5'-end of a downstream Okazaki fragment. The chain is Flap endonuclease Xni from Shewanella baltica (strain OS195).